We begin with the raw amino-acid sequence, 200 residues long: Putative TLC domain-containing protein L438 (200 aa).

The TLC domain maps to 1-193 (MDYKQSNLFL…ILKILRAKLF (193 aa)). 6 helical membrane-spanning segments follow: residues 9 to 29 (FLFPIGLGSTYIFYKKICGTF), 43 to 63 (THGILMLTLVYFLSDYYLMIV), 74 to 94 (VHHFIGIVSIYFSYMKYYYLI), 96 to 116 (YLFAYLTFELSTPFLNIAIKY), 131 to 151 (LAFFILFTVVRIIFGTYLWFV), and 165 to 185 (YLIVLPTILQFLNYWWYYRIL).

The protein localises to the membrane. The sequence is that of Putative TLC domain-containing protein L438 from Acanthamoeba polyphaga mimivirus (APMV).